Consider the following 364-residue polypeptide: Geissoschizine synthase (364 aa).

Zn(2+) is bound at residue Cys51. Residue Asn52 participates in NADP(+) binding. His73, Glu74, Cys104, Cys107, Cys110, Cys118, and Cys168 together coordinate Zn(2+). The NADP(+) site is built by Leu194, Gly196, Leu197, Ser216, Thr217, Ser218, Lys221, Arg261, Val280, Ala282, Ser304, Thr306, and Arg351.

The protein belongs to the zinc-containing alcohol dehydrogenase family. Class-III subfamily. As to quaternary structure, homodimer. Requires Zn(2+) as cofactor. In terms of tissue distribution, expressed in leaf epidermis.

It catalyses the reaction (19E)-geissoschizine + NADP(+) = 4,21-dehydrogeissoschizine + NADPH. It participates in alkaloid biosynthesis. In terms of biological role, component of the seco-iridoid and derivatives monoterpenoid indole alkaloids (MIAs, e.g. catharanthine, tabersonine, vincadifformine, vindoline, vincristine, quinine and strychnine) biosynthesis pathway. During the conversion of strictosidine aglycone to geissoschizine, catalyzes iminium reduction on 4,21-dehydrogeissoschizine to produce 19E-geissoschizine, precursor of catharanthine and tabersonine derivatives. May also trigger the production of reactive intermediate used by the HL1, HL2, HL3 and HL4 to form catharanthine, vincadifformine and tabersonine. The chain is Geissoschizine synthase from Catharanthus roseus (Madagascar periwinkle).